A 160-amino-acid polypeptide reads, in one-letter code: Small ribosomal subunit protein uS19 (160 aa).

Positions 1-27 are disordered; the sequence is MARQKFSGKGGKGKSKKGQQSTAPRRR.

Belongs to the universal ribosomal protein uS19 family.

Functionally, protein S19 forms a complex with S13 that binds strongly to the 16S ribosomal RNA. The protein is Small ribosomal subunit protein uS19 of Methanococcus vannielii (strain ATCC 35089 / DSM 1224 / JCM 13029 / OCM 148 / SB).